The chain runs to 419 residues: Histidine--tRNA ligase (419 aa).

The protein belongs to the class-II aminoacyl-tRNA synthetase family. Homodimer.

The protein resides in the cytoplasm. The catalysed reaction is tRNA(His) + L-histidine + ATP = L-histidyl-tRNA(His) + AMP + diphosphate + H(+). The protein is Histidine--tRNA ligase of Trichlorobacter lovleyi (strain ATCC BAA-1151 / DSM 17278 / SZ) (Geobacter lovleyi).